The sequence spans 189 residues: Calcium and integrin-binding family member 2 (189 aa).

EF-hand domains follow at residues 68–103 (RENPFRRRICEAFSRDGQGNLSFEDFLDALSVFSEQ), 105–140 (PRDIKVFYAFKIYDFDQDGFIGHADLMSCLTTMTKN), and 146–181 (EHQQIADKVIEEADVDGDGKLSILEFEHVILRAPDF). Residues Asp-118, Asp-120, Asp-122, Asp-129, Asp-159, Asp-161, Asp-163, Lys-165, and Glu-170 each contribute to the Ca(2+) site.

In terms of assembly, monomer. Homodimer.

The protein resides in the cytoplasm. Calcium- and integrin-binding protein. Plays a role in intracellular calcium homeostasis. Critical for proper photoreceptor cell maintenance and function. Required for prevention of light-dependent retinal degeneration. The polypeptide is Calcium and integrin-binding family member 2 (Drosophila melanogaster (Fruit fly)).